A 247-amino-acid polypeptide reads, in one-letter code: Type III pantothenate kinase (247 aa).

7-14 (AIGNSRWH) is an ATP binding site. Substrate-binding positions include Tyr91 and 95 to 98 (GLDR). Asp97 acts as the Proton acceptor in catalysis. A K(+)-binding site is contributed by Asp117. An ATP-binding site is contributed by Thr120. Thr172 is a binding site for substrate.

Belongs to the type III pantothenate kinase family. Homodimer. The cofactor is NH4(+). Requires K(+) as cofactor.

It localises to the cytoplasm. It carries out the reaction (R)-pantothenate + ATP = (R)-4'-phosphopantothenate + ADP + H(+). It functions in the pathway cofactor biosynthesis; coenzyme A biosynthesis; CoA from (R)-pantothenate: step 1/5. Catalyzes the phosphorylation of pantothenate (Pan), the first step in CoA biosynthesis. This Synechococcus elongatus (strain ATCC 33912 / PCC 7942 / FACHB-805) (Anacystis nidulans R2) protein is Type III pantothenate kinase.